A 107-amino-acid chain; its full sequence is MKTLLLALAVVVLVCLGSANELGLGRQRVDRRRRQAVGAPYGLCFQCNQKSSRDCLNPKRCPYFHRTCYTLYNSGGQWTVKGCAKMCPTAGPNERVKCCYKPECNND.

Residues 1–19 (MKTLLLALAVVVLVCLGSA) form the signal peptide. The propeptide occupies 20–34 (NELGLGRQRVDRRRR). 5 disulfides stabilise this stretch: Cys-44/Cys-68, Cys-47/Cys-55, Cys-61/Cys-83, Cys-87/Cys-98, and Cys-99/Cys-104.

The protein belongs to the three-finger toxin family. Ancestral subfamily. Boigatoxin sub-subfamily. As to quaternary structure, monomer. In terms of tissue distribution, expressed by the venom gland.

It is found in the secreted. Functionally, mammal-specific neurotoxin (tested on mice). Not toxic to lizards (tested on geckos). The protein is Sulmotoxin 1 of Spilotes sulphureus (Amazon puffing snake).